Here is a 593-residue protein sequence, read N- to C-terminus: Tyrosine-protein phosphatase non-receptor type 11 (593 aa).

T2 is subject to N-acetylthreonine. SH2 domains lie at 6–102 (WFHP…KYPL) and 112–216 (WFHG…KQPL). Phosphotyrosine is present on residues Y62 and Y66. One can recognise a Tyrosine-protein phosphatase domain in the interval 247 to 521 (FWEEFETLQQ…RFIYMAVQHY (275 aa)). Substrate-binding positions include D425, 459-465 (CSAGIGR), and Q506. Catalysis depends on C459, which acts as the Phosphocysteine intermediate. 2 positions are modified to phosphotyrosine; by PDGFR: Y542 and Y580.

It belongs to the protein-tyrosine phosphatase family. Non-receptor class 2 subfamily. Interacts with CD84 and with phosphorylated SIT1 and MZPL1. Interacts with FCRL4, FCRL6 and ANKHD1. Interacts with GAREM1 (tyrosine phosphorylated); the interaction increases MAPK/ERK activity and does not affect the GRB2/SOS complex formation. Interacts with PTPNS1 and BCAR3. Interacts with phosphorylated LIME1. Interacts with SHB and INPP5D/SHIP1. Interacts with KIR2DL1; the interaction is enhanced by ARRB2. Interacts with GAB2. Interacts with TERT; the interaction retains TERT in the nucleus. Interacts with PECAM1 and FER. Interacts with EPHA2 (activated); participates in PTK2/FAK1 dephosphorylation in EPHA2 downstream signaling. Interacts with MILR1 (tyrosine phosphorylated). Interacts with FLT1 (tyrosine-phosphorylated), FLT3 (tyrosine-phosphorylated), FLT4 (tyrosine-phosphorylated), KIT and GRB2. Interacts with ROS1; mediates PTPN11 phosphorylation. Interacts with PDGFRA (tyrosine phosphorylated). Interacts with PDGFRB (tyrosine phosphorylated); this interaction increases the PTPN11 phosphatase activity. Interacts (via SH2 domain) with TEK/TIE2 (tyrosine phosphorylated). Interacts with CEACAM1 (via cytoplasmic domain); this interaction depends on the monomer/dimer equilibrium and is phosphorylation-dependent. Interacts with MPIG6B (via ITIM motif). Interacts with SIGLEC10. Interacts with Lilrb4a (when tyrosine phosphorylated). Interacts with SIGLEC10. Interacts with CLEC12B (via ITIM motif); this interaction triggers dephosphorylation and activation of PTPN11. Interacts (via SH2 domains) with NEDD9/CAS-L; the interaction is enhanced when NEDD9/CAS-L is tyrosine phosphorylated. Interacts with PIRB; when PIRB is phosphorylated by LYN at 'Tyr-794' and 'Tyr-824'. In terms of processing, phosphorylated on Tyr-542 and Tyr-580 upon receptor protein tyrosine kinase activation; which creates a binding site for GRB2 and other SH2-containing proteins. Phosphorylated upon activation of the receptor-type kinase FLT3. Phosphorylated by activated PDGFRB. Phosphorylated upon activation of the receptor-type kinase PDGFRA. As to expression, highly expressed in brain, heart and kidney.

It is found in the cytoplasm. It catalyses the reaction O-phospho-L-tyrosyl-[protein] + H2O = L-tyrosyl-[protein] + phosphate. In terms of biological role, acts downstream of various receptor and cytoplasmic protein tyrosine kinases to participate in the signal transduction from the cell surface to the nucleus. Positively regulates MAPK signal transduction pathway. Dephosphorylates GAB1, ARHGAP35 and EGFR. Dephosphorylates ROCK2 at 'Tyr-722' resulting in stimulation of its RhoA binding activity. Dephosphorylates CDC73. Dephosphorylates SOX9 on tyrosine residues, leading to inactivate SOX9 and promote ossification. Dephosphorylates tyrosine-phosphorylated NEDD9/CAS-L. This Mus musculus (Mouse) protein is Tyrosine-protein phosphatase non-receptor type 11 (Ptpn11).